Here is a 435-residue protein sequence, read N- to C-terminus: NADH-quinone oxidoreductase subunit D 2 (435 aa).

Belongs to the complex I 49 kDa subunit family. As to quaternary structure, NDH-1 is composed of 14 different subunits. Subunits NuoB, C, D, E, F, and G constitute the peripheral sector of the complex.

The protein localises to the cell inner membrane. The catalysed reaction is a quinone + NADH + 5 H(+)(in) = a quinol + NAD(+) + 4 H(+)(out). In terms of biological role, NDH-1 shuttles electrons from NADH, via FMN and iron-sulfur (Fe-S) centers, to quinones in the respiratory chain. The immediate electron acceptor for the enzyme in this species is believed to be ubiquinone. Couples the redox reaction to proton translocation (for every two electrons transferred, four hydrogen ions are translocated across the cytoplasmic membrane), and thus conserves the redox energy in a proton gradient. This is NADH-quinone oxidoreductase subunit D 2 from Stenotrophomonas maltophilia (strain R551-3).